We begin with the raw amino-acid sequence, 269 residues long: Hydroxypyruvate/pyruvate aldolase (269 aa).

His47 (proton acceptor) is an active-site residue. A divalent metal cation is bound by residues Glu151 and Asp177.

This sequence belongs to the HpcH/HpaI aldolase family. It depends on a divalent metal cation as a cofactor.

It catalyses the reaction D-glyceraldehyde + 3-hydroxypyruvate = 2-dehydro-D-gluconate. The catalysed reaction is D-glyceraldehyde + 3-hydroxypyruvate = (3R,4S,5R)-3,4,5,6-tetrahydroxy-2-oxohexanoate. It carries out the reaction D-glyceraldehyde + 3-hydroxypyruvate = 2-dehydro-D-galactonate. The enzyme catalyses D-glyceraldehyde + pyruvate = 2-dehydro-3-deoxy-L-galactonate. It catalyses the reaction 2-dehydro-3-deoxy-D-gluconate = D-glyceraldehyde + pyruvate. Its function is as follows. Aldolase which can catalyze in vitro the aldolisation reaction between hydroxypyruvate (HPA) or pyruvate (PA) and D-glyceraldehyde (D-GA). The condensation of hydroxypyruvate and D-glyceraldehyde produces 2-dehydro-D-gluconate as the major product, (3R,4S,5R)-3,4,5,6-tetrahydroxy-2-oxohexanoate and 2-dehydro-D-galactonate. The condensation of pyruvate and D-glyceraldehyde produces 2-dehydro-3-deoxy-L-galactonate as the major product and 2-dehydro-3-deoxy-D-gluconate. The sequence is that of Hydroxypyruvate/pyruvate aldolase from Cupriavidus necator (strain ATCC 17699 / DSM 428 / KCTC 22496 / NCIMB 10442 / H16 / Stanier 337) (Ralstonia eutropha).